A 417-amino-acid chain; its full sequence is Serine hydroxymethyltransferase (417 aa).

(6S)-5,6,7,8-tetrahydrofolate contacts are provided by residues leucine 121 and 125-127; that span reads GHL. An N6-(pyridoxal phosphate)lysine modification is found at lysine 229. 354–356 serves as a coordination point for (6S)-5,6,7,8-tetrahydrofolate; it reads SPF.

This sequence belongs to the SHMT family. In terms of assembly, homodimer. Pyridoxal 5'-phosphate is required as a cofactor.

It localises to the cytoplasm. It catalyses the reaction (6R)-5,10-methylene-5,6,7,8-tetrahydrofolate + glycine + H2O = (6S)-5,6,7,8-tetrahydrofolate + L-serine. It functions in the pathway one-carbon metabolism; tetrahydrofolate interconversion. Its pathway is amino-acid biosynthesis; glycine biosynthesis; glycine from L-serine: step 1/1. In terms of biological role, catalyzes the reversible interconversion of serine and glycine with tetrahydrofolate (THF) serving as the one-carbon carrier. This reaction serves as the major source of one-carbon groups required for the biosynthesis of purines, thymidylate, methionine, and other important biomolecules. Also exhibits THF-independent aldolase activity toward beta-hydroxyamino acids, producing glycine and aldehydes, via a retro-aldol mechanism. In Dichelobacter nodosus (strain VCS1703A), this protein is Serine hydroxymethyltransferase.